The following is an 84-amino-acid chain: Defensin-like protein 172 (84 aa).

A signal peptide spans 1–23; the sequence is MAKASSTLVLSIIFLVMFALVEQ. Disulfide bonds link C27–C74, C34–C56, C40–C68, and C44–C70.

The protein belongs to the DEFL family.

It is found in the secreted. This chain is Defensin-like protein 172 (LCR60), found in Arabidopsis thaliana (Mouse-ear cress).